We begin with the raw amino-acid sequence, 625 residues long: Endo-1,4-beta-xylanase A (625 aa).

The N-terminal stretch at 1–19 (MKLFQIFPLLLSLTSVTLA) is a signal peptide. In terms of domain architecture, GH11 1 spans 35 to 231 (VSTGHDVKKI…TGGGCSGSVE (197 aa)). A disordered region spans residues 245 to 283 (DGKSKGGSSSGGSNGQGLGNGQGNGQGQGNGQGQSATGS). Over residues 252–276 (SSSGGSNGQGLGNGQGNGQGQGNGQ) the composition is skewed to gly residues. Residues 255 to 279 (GGSNGQGLGNGQGNGQGQGNGQGQS) are linker. 2 tandem repeats follow at residues 259-268 (GQGLGNGQGN) and 269-278 (GQGQGNGQGQ). A 2 X 10 AA tandem repeats of G-Q-G-[LQ]-G-N-G-Q-G-[NQ] region spans residues 259–278 (GQGLGNGQGNGQGQGNGQGQ). CBM10 domains lie at 285 to 324 (KCPSTITSQGYKCCSSNCDIIYRDQSGDWGVENDEWCGCG) and 332 to 371 (NCPSSIKNQGYKCCSDSCEIVLTDSDGDWGIENDEWCGCG). The interval 374–403 (NTTPTTTTKKSNNSQPTQGQSNNNSSTNTN) is linker. Residues 379–399 (TTTKKSNNSQPTQGQSNNNSS) are disordered. Positions 416 to 617 (TETSNKVGSI…GSGTSGTADF (202 aa)) constitute a GH11 2 domain. The Nucleophile role is filled by Glu-510. Glu-603 (proton donor) is an active-site residue.

Belongs to the glycosyl hydrolase 11 (cellulase G) family.

It carries out the reaction Endohydrolysis of (1-&gt;4)-beta-D-xylosidic linkages in xylans.. It participates in glycan degradation; xylan degradation. Functionally, hydrolyzes 1,4-beta linked polysaccharide backbones of xylans, one of the major hemicellulose components in hardwoods and softwoods. It is more active against xylopentaose than xylotetraose, has trace activity against xylotriose. The major products released from hydrolysis of xylooligosaccharides are xylobiose and xylotriose. The reiterated 40 AA domain is involved in binding the cellulase-hemicellulase complex. The chain is Endo-1,4-beta-xylanase A (XYNA) from Piromyces sp.